Here is a 247-residue protein sequence, read N- to C-terminus: Segregation and condensation protein A (247 aa).

This sequence belongs to the ScpA family. In terms of assembly, component of a cohesin-like complex composed of ScpA, ScpB and the Smc homodimer, in which ScpA and ScpB bind to the head domain of Smc. The presence of the three proteins is required for the association of the complex with DNA.

The protein resides in the cytoplasm. In terms of biological role, participates in chromosomal partition during cell division. May act via the formation of a condensin-like complex containing Smc and ScpB that pull DNA away from mid-cell into both cell halves. The sequence is that of Segregation and condensation protein A from Lactobacillus gasseri (strain ATCC 33323 / DSM 20243 / BCRC 14619 / CIP 102991 / JCM 1131 / KCTC 3163 / NCIMB 11718 / NCTC 13722 / AM63).